The following is a 376-amino-acid chain: Queuine tRNA-ribosyltransferase (376 aa).

Residue Asp90 is the Proton acceptor of the active site. Substrate contacts are provided by residues 90–94, Asp144, Gln193, and Gly220; that span reads DSGGF. Positions 251–257 are RNA binding; sequence GVGTPED. Asp270 acts as the Nucleophile in catalysis. The RNA binding; important for wobble base 34 recognition stretch occupies residues 275 to 279; it reads TRNAR. Zn(2+)-binding residues include Cys308, Cys310, Cys313, and His339.

It belongs to the queuine tRNA-ribosyltransferase family. Homodimer. Within each dimer, one monomer is responsible for RNA recognition and catalysis, while the other monomer binds to the replacement base PreQ1. It depends on Zn(2+) as a cofactor.

The enzyme catalyses 7-aminomethyl-7-carbaguanine + guanosine(34) in tRNA = 7-aminomethyl-7-carbaguanosine(34) in tRNA + guanine. It participates in tRNA modification; tRNA-queuosine biosynthesis. Catalyzes the base-exchange of a guanine (G) residue with the queuine precursor 7-aminomethyl-7-deazaguanine (PreQ1) at position 34 (anticodon wobble position) in tRNAs with GU(N) anticodons (tRNA-Asp, -Asn, -His and -Tyr). Catalysis occurs through a double-displacement mechanism. The nucleophile active site attacks the C1' of nucleotide 34 to detach the guanine base from the RNA, forming a covalent enzyme-RNA intermediate. The proton acceptor active site deprotonates the incoming PreQ1, allowing a nucleophilic attack on the C1' of the ribose to form the product. After dissociation, two additional enzymatic reactions on the tRNA convert PreQ1 to queuine (Q), resulting in the hypermodified nucleoside queuosine (7-(((4,5-cis-dihydroxy-2-cyclopenten-1-yl)amino)methyl)-7-deazaguanosine). This Cupriavidus pinatubonensis (strain JMP 134 / LMG 1197) (Cupriavidus necator (strain JMP 134)) protein is Queuine tRNA-ribosyltransferase.